A 239-amino-acid chain; its full sequence is Putative CRISPR-associated endoribonuclease-like protein Cas6nc (239 aa).

Belongs to the CRISPR-associated protein Cas6/Cse3/CasE family. In terms of assembly, monomer; homodimer when crystallized in the presence of crRNA. Varying the crRNA sequence varies degree of oligomerization and structure.

Its function is as follows. CRISPR (clustered regularly interspaced short palindromic repeat), is an adaptive immune system that provides protection against mobile genetic elements (viruses, transposable elements and conjugative plasmids). CRISPR clusters contain sequences complementary to antecedent mobile elements and target invading nucleic acids. CRISPR clusters are transcribed and processed into CRISPR RNA (crRNA), also called psiRNA (prokaryotic silencing) in this organism (Potential). This Pyrococcus horikoshii (strain ATCC 700860 / DSM 12428 / JCM 9974 / NBRC 100139 / OT-3) protein is Putative CRISPR-associated endoribonuclease-like protein Cas6nc (cas6nc).